The sequence spans 436 residues: MVMTKKDTNISTQQPLWLQGYIDSPEKQNQLYKKTLKILIFSQIFGGAGLGAGITVGALLAQDMIGSENVAGIPTALFTFGSAVAALLIGASSQRFGRRAGLAGGFLIGGLGAIGVIIAALINSVALLFVSLLIYGAGMASNLQVRYAGTDLANEKQRATAASMALVSTTLGAVVGPNLVNTMGEFADSIGVPNLAGPFIMSGAAFIIAGIILLIFLRPDPLFVSTAIANAEKKDDKVQIGGSLKNPAIDKKGIMVGAVIMILAQLIMTAIMTMTPVHMGHHGHGLSEVGLVIGLHIAAMYLPSPLTGLLVDKFGRTTMAIASGATLLAAGLVAAIAPADSLSLLILALVLLGVGWNFGLLTGTALIIDSTHPSLRAKTQGTFDVLLALSGAAGGALSGMVVAHSSYTILSISGAVLSLLLIPVVIWYFRRIQEKA.

12 helical membrane passes run 38–58, 70–90, 102–122, 125–145, 160–180, 197–217, 254–274, 291–311, 319–339, 342–362, 383–403, and 409–429; these read ILIFSQIFGGAGLGAGITVGA, VAGIPTALFTFGSAVAALLIG, LAGGFLIGGLGAIGVIIAALI, VALLFVSLLIYGAGMASNLQV, TAASMALVSTTLGAVVGPNLV, GPFIMSGAAFIIAGIILLIFL, IMVGAVIMILAQLIMTAIMTM, LVIGLHIAAMYLPSPLTGLLV, MAIASGATLLAAGLVAAIAPA, LSLLILALVLLGVGWNFGLLT, FDVLLALSGAAGGALSGMVVA, and ILSISGAVLSLLLIPVVIWYF.

This sequence belongs to the major facilitator superfamily.

The protein resides in the cell membrane. This is an uncharacterized protein from Bacillus subtilis (strain 168).